The chain runs to 285 residues: Mediator of RNA polymerase II transcription subunit 4 (285 aa).

Positions 1–13 (MSTPGPVPSSTSV) are enriched in low complexity. The disordered stretch occupies residues 1 to 25 (MSTPGPVPSSTSVATLPFSAQDKTQ). The stretch at 31-115 (ELQSVGIYQD…TREILETLNT (85 aa)) forms a coiled coil. Residues 206–285 (DNVNNDNNTS…DLDLFNPDEF (80 aa)) form a disordered region. 2 stretches are compositionally biased toward basic and acidic residues: residues 216-250 (KIDEMRNTNEDSVDDRFNNKEQVQDATEDTERRGS) and 257-267 (GKEDSETKSEE). Positions 268 to 285 (NPDLELDLDLDLFNPDEF) are enriched in acidic residues.

It belongs to the Mediator complex subunit 4 family. In terms of assembly, component of the Mediator complex.

The protein localises to the nucleus. Component of the Mediator complex, a coactivator involved in the regulated transcription of nearly all RNA polymerase II-dependent genes. Mediator functions as a bridge to convey information from gene-specific regulatory proteins to the basal RNA polymerase II transcription machinery. Mediator is recruited to promoters by direct interactions with regulatory proteins and serves as a scaffold for the assembly of a functional preinitiation complex with RNA polymerase II and the general transcription factors. The chain is Mediator of RNA polymerase II transcription subunit 4 (MED4) from Kluyveromyces lactis (strain ATCC 8585 / CBS 2359 / DSM 70799 / NBRC 1267 / NRRL Y-1140 / WM37) (Yeast).